The sequence spans 145 residues: D-aminoacyl-tRNA deacylase (145 aa).

The Gly-cisPro motif, important for rejection of L-amino acids motif lies at 137 to 138; sequence GP.

This sequence belongs to the DTD family. In terms of assembly, homodimer.

The protein resides in the cytoplasm. The catalysed reaction is glycyl-tRNA(Ala) + H2O = tRNA(Ala) + glycine + H(+). It carries out the reaction a D-aminoacyl-tRNA + H2O = a tRNA + a D-alpha-amino acid + H(+). In terms of biological role, an aminoacyl-tRNA editing enzyme that deacylates mischarged D-aminoacyl-tRNAs. Also deacylates mischarged glycyl-tRNA(Ala), protecting cells against glycine mischarging by AlaRS. Acts via tRNA-based rather than protein-based catalysis; rejects L-amino acids rather than detecting D-amino acids in the active site. By recycling D-aminoacyl-tRNA to D-amino acids and free tRNA molecules, this enzyme counteracts the toxicity associated with the formation of D-aminoacyl-tRNA entities in vivo and helps enforce protein L-homochirality. The sequence is that of D-aminoacyl-tRNA deacylase from Pectobacterium carotovorum subsp. carotovorum (strain PC1).